Consider the following 331-residue polypeptide: DNA fragmentation factor subunit alpha (331 aa).

Met-1 is subject to N-acetylmethionine. A CIDE-N domain is found at 17–96; the sequence is PLKPCLLRRN…ALACNEKWIY (80 aa). Thr-243 bears the Phosphothreonine mark. The tract at residues 306–331 is disordered; that stretch reads LRNLSARRSPLPGEPQRPKRAKRDSS.

In terms of assembly, heterodimer of DFFA and DFFB. In terms of processing, caspase-3 cleaves DFF45 at 2 sites to generate an active factor.

It localises to the cytoplasm. Functionally, inhibitor of the caspase-activated DNase (DFF40). The chain is DNA fragmentation factor subunit alpha (Dffa) from Mus musculus (Mouse).